Consider the following 796-residue polypeptide: Transcription factor kayak (796 aa).

4 disordered regions span residues 109–132 (AYQQ…SNTS), 315–341 (VVNN…SNTV), 374–429 (FNCG…GSNG), and 442–490 (VGSA…RNKL). A compositionally biased stretch (low complexity) spans 402-429 (TTDTSSAATDSTSYQNGGHMFGNNGSNG). Polar residues predominate over residues 447–457 (RGTSSTSNNAT). Positions 478 to 541 (EEKRRVRRER…HQLNFVLEAH (64 aa)) constitute a bZIP domain. Residues 480-499 (KRRVRRERNKLAAARCRKRR) form a basic motif region. Residues 506–534 (LSEEVDGLLKKNEDLKKEIEILTNTRHQL) form a leucine-zipper region. The interval 569 to 601 (SSGSNGSHHHNSNSNNSNNNNSNNNNNSNSNDS) is disordered. Ser-621 is subject to Phosphoserine. 2 disordered regions span residues 642–661 (PHDA…PPAA) and 774–796 (SSQN…LVSL).

Belongs to the bZIP family. Fos subfamily. As to quaternary structure, homodimer. Heterodimer with Jra. The kay-Jra heterodimer binds more stably to the AP-1 site than either of the two proteins alone.

It is found in the nucleus. Developmentally regulated transcription factor AP-1 binds and recognizes the enhancer DNA sequence: 5'-TGA[CG]TCA-3'. May play a role in the function or determination of a particular subset of cells in the developing embryo. It is able to carry out its function either independently of or in conjunction with Jra. In Drosophila grimshawi (Hawaiian fruit fly), this protein is Transcription factor kayak.